Consider the following 602-residue polypeptide: Beta-(1--&gt;2)glucan export ATP-binding/permease protein NdvA (602 aa).

Residues 21–311 form the ABC transmembrane type-1 domain; that stretch reads GWVLAGANLL…VVGFVNSVFM (291 aa). 6 helical membrane passes run 22–42, 68–88, 146–166, 167–187, 238–258, and 285–305; these read WVLAGANLLLAAAQFAEPVLF, LLLAWAVFGLFTIGCGAAVAL, EHFAALMSLVVLLPLSIYINW, RLALLLFALCVVFTVLTTLVV, LLAMQMPVLSWWALVTVITRA, and IVMFVSFATMLIQKLEQVVGF. One can recognise an ABC transporter domain in the interval 345–579; sequence VEFDNVSFSY…RGYFAELAHA (235 aa). ATP is bound at residue 378–385; the sequence is GATGAGKS.

It belongs to the ABC transporter superfamily. Beta-(1--&gt;2)glucan exporter (TC 3.A.1.108.1) family. In terms of assembly, homodimer.

It localises to the cell inner membrane. The catalysed reaction is [(1-&gt;2)-beta-D-glucosyl](n)(in) + ATP + H2O = [(1-&gt;2)-beta-D-glucosyl](n)(out) + ADP + phosphate + H(+). Involved in Beta-(1--&gt;2)glucan export. Transmembrane domains (TMD) form a pore in the inner membrane and the ATP-binding domain (NBD) is responsible for energy generation. The chain is Beta-(1--&gt;2)glucan export ATP-binding/permease protein NdvA from Rhodopseudomonas palustris (strain BisA53).